We begin with the raw amino-acid sequence, 497 residues long: Peptidoglycan endopeptidase RipA (497 aa).

The N-terminal stretch at 1–39 (MRRTVRALATRVHGRVCAVPLVVGMLLATALYGGGPAAA) is a signal peptide. Basic and acidic residues predominate over residues 177-192 (ARLAKEKADQAARDAE). 2 disordered regions span residues 177–198 (ARLAKEKADQAARDAESSQDNA) and 253–297 (APAA…GQNW). Pro residues predominate over residues 255-273 (AAAPAPVPNSAPAPVPGAQ). The NlpC/P60 domain maps to 365–497 (REAVEYVIRR…TPYVTRLIEY (133 aa)). C408 (nucleophile) is an active-site residue. The active-site Proton acceptor is the H457. Residue E469 is part of the active site.

It belongs to the peptidase C40 family. In terms of assembly, monomer.

The protein resides in the secreted. Its function is as follows. Peptidoglycan endopeptidase that cleaves the bond between D-glutamate and meso-diaminopimelate. Binds and degrades high-molecular weight peptidoglycan. Required for normal separation of daughter cells after cell division and for cell wall integrity. The protein is Peptidoglycan endopeptidase RipA (ripA) of Mycolicibacterium smegmatis (strain ATCC 700084 / mc(2)155) (Mycobacterium smegmatis).